The chain runs to 161 residues: MQLLLLIPLHYRLKDSKRIYQIILNLGSLLRISSIRQDNMELLELIIDPMIKAEVIERVSEFLTKTLGKIIVKCNDTSGFIANRVGYFLLELVARKAISQNLDVATIDKIFTTFLGLPSTGIFGLYDLIGYDVMKLISSSLLASLPANDAYHKIICKDPCS.

This is an uncharacterized protein from Rickettsia conorii (strain ATCC VR-613 / Malish 7).